Here is a 1314-residue protein sequence, read N- to C-terminus: E3 ubiquitin-protein ligase RNF123 (1314 aa).

Ala2 carries the post-translational modification N-acetylalanine. The region spanning 74-254 is the B30.2/SPRY domain; the sequence is VDNEEEESQG…VAFNFGSRPL (181 aa). The residue at position 675 (Ser675) is a Phosphoserine. Arg683 carries the asymmetric dimethylarginine modification. The interaction with NFKB1 stretch occupies residues 968–974; it reads WILVRLW. Positions 1254, 1257, 1269, 1271, 1274, 1277, 1288, and 1291 each coordinate Zn(2+). Residues 1254 to 1292 form an RING-type zinc finger; that stretch reads CPICYAHPISAVFQPCGHKSCKACINQHLMNNKDCFFCK.

Component of the KPC complex composed of RNF123/KPC1 and UBAC1/KPC2. Interacts with UBAC1 and CDKN1B via its N-terminal domain. Interacts with RIGI (via N-terminus) and IFIH1 (via N-terminus). In terms of processing, ubiquitinated, leading to its degradation. Deubiquitinated by USP19, thereby stimulating CDKN1B ubiquitin-dependent degradation.

The protein resides in the cytoplasm. The catalysed reaction is S-ubiquitinyl-[E2 ubiquitin-conjugating enzyme]-L-cysteine + [acceptor protein]-L-lysine = [E2 ubiquitin-conjugating enzyme]-L-cysteine + N(6)-ubiquitinyl-[acceptor protein]-L-lysine.. It functions in the pathway protein modification; protein ubiquitination. Functionally, catalytic subunit of the KPC complex that acts as E3 ubiquitin-protein ligase. Promotes the ubiquitination and proteasome-mediated degradation of CDKN1B which is the cyclin-dependent kinase inhibitor at the G0-G1 transition of the cell cycle. Also acts as a key regulator of the NF-kappa-B signaling by promoting maturation of the NFKB1 component of NF-kappa-B: acts by catalyzing ubiquitination of the NFKB1 p105 precursor, leading to limited proteasomal degradation of NFKB1 p105 and generation of the active NFKB1 p50 subunit. Also functions as an inhibitor of innate antiviral signaling mediated by RIGI and IFIH1 independently of its E3 ligase activity. Interacts with the N-terminal CARD domains of RIGI and IFIH1 and competes with the downstream adapter MAVS. The polypeptide is E3 ubiquitin-protein ligase RNF123 (Homo sapiens (Human)).